We begin with the raw amino-acid sequence, 87 residues long: Glutaredoxin (87 aa).

Residues 1–87 enclose the Glutaredoxin domain; it reads MFKVYGYDSN…GFDQLREYFK (87 aa). Cys-14 and Cys-17 are oxidised to a cystine.

It belongs to the glutaredoxin family.

Its function is as follows. Serves as a reducing agent for the phage-induced ribonucleotide reductase, but not for the bacterial ones. This specificity may be the result of sequence differences around the redox-active disulfide bond. The oxidized form accepts electrons from bacterial glutathione and will, in turn, reduce other small disulfides. Can also be reduced by NADPH and by bacterial thioredoxin reductase. The chain is Glutaredoxin (NRDC) from Enterobacteria phage T4 (Bacteriophage T4).